A 99-amino-acid polypeptide reads, in one-letter code: Aspartyl/glutamyl-tRNA(Asn/Gln) amidotransferase subunit C (99 aa).

This sequence belongs to the GatC family. In terms of assembly, heterotrimer of A, B and C subunits.

It catalyses the reaction L-glutamyl-tRNA(Gln) + L-glutamine + ATP + H2O = L-glutaminyl-tRNA(Gln) + L-glutamate + ADP + phosphate + H(+). It carries out the reaction L-aspartyl-tRNA(Asn) + L-glutamine + ATP + H2O = L-asparaginyl-tRNA(Asn) + L-glutamate + ADP + phosphate + 2 H(+). Allows the formation of correctly charged Asn-tRNA(Asn) or Gln-tRNA(Gln) through the transamidation of misacylated Asp-tRNA(Asn) or Glu-tRNA(Gln) in organisms which lack either or both of asparaginyl-tRNA or glutaminyl-tRNA synthetases. The reaction takes place in the presence of glutamine and ATP through an activated phospho-Asp-tRNA(Asn) or phospho-Glu-tRNA(Gln). This chain is Aspartyl/glutamyl-tRNA(Asn/Gln) amidotransferase subunit C, found in Bifidobacterium longum (strain NCC 2705).